Reading from the N-terminus, the 242-residue chain is Galectin-3 (242 aa).

A disordered region spans residues 1–35 (MADGFSLNDALSGSGHPPNQGWPGPWGNQPAGPGG). Ala2 is modified (N-acetylalanine). Phosphoserine; by CK1 is present on Ser6. Ser12 carries the post-translational modification Phosphoserine. Over residues 17–31 (PPNQGWPGPWGNQPA) the composition is skewed to low complexity. 4 tandem repeats follow at residues 35 to 43 (GYPGAAYPG), 44 to 52 (AYPGHAPGA), 53 to 61 (YPGQAPPGP), and 62 to 70 (YPGPGAHGA). The interval 35 to 98 (GYPGAAYPGA…GAGAYPGASP (64 aa)) is 7 X 9 AA tandem repeats of Y-P-G-X(3)-P-[GS]-A. The segment at 55–93 (GQAPPGPYPGPGAHGAYPGQPGGPGAYPSPGQPSGAGAY) is disordered. A 5; approximate repeat occupies 71–80 (YPGQPGGPGA). Over residues 80–93 (AYPSPGQPSGAGAY) the composition is skewed to low complexity. Residues 81-92 (YPSPGQPSGAGA) form a 6; approximate repeat. Residues 93–98 (YPGASP) form a 7; truncated repeat. Residues 110-240 (YDLPLPGGVM…DIQLTSASHA (131 aa)) enclose the Galectin domain. 173–181 (WGREERQTT) provides a ligand contact to a beta-D-galactoside. The Nuclear export signal signature appears at 218–233 (RNLKEINKLGISGDIQ).

Probably forms homo- or heterodimers. Interacts with DMBT1. Interacts with CD6 and ALCAM. Forms a complex with the ITGA3, ITGB1 and CSPG4. Interacts with LGALS3BP, LYPD3, ZFTRAF1 and UACA. Interacts with TRIM16; this interaction mediates autophagy of damage endomembranes. Interacts with cargo receptor TMED10; the interaction mediates the translocation from the cytoplasm into the ERGIC (endoplasmic reticulum-Golgi intermediate compartment) and thereby secretion. Interacts with and inhibits by binding NCR3/NKp30.

The protein resides in the cytoplasm. It localises to the nucleus. The protein localises to the secreted. Functionally, galactose-specific lectin which binds IgE. May mediate with the alpha-3, beta-1 integrin the stimulation by CSPG4 of endothelial cells migration. Together with DMBT1, required for terminal differentiation of columnar epithelial cells during early embryogenesis. In the nucleus: acts as a pre-mRNA splicing factor. Involved in acute inflammatory responses including neutrophil activation and adhesion, chemoattraction of monocytes macrophages, opsonization of apoptotic neutrophils, and activation of mast cells. Together with TRIM16, coordinates the recognition of membrane damage with mobilization of the core autophagy regulators ATG16L1 and BECN1 in response to damaged endomembranes. When secreted, interacts with NK cell-activating receptor NCR3/NKp30 acting as an inhibitory ligand which antagonizes NK cell attack. The chain is Galectin-3 (LGALS3) from Oryctolagus cuniculus (Rabbit).